Consider the following 299-residue polypeptide: MLRLFYFSAVIASVILNFVGIIMNLFITVVNCKTWVKSHRISSSDRILFSLGITRFLMLGLFLVNTIYFVSSNMERSVYLSAFFVLCFMFLDSSSLWFVTLLNILYCVKITNFQHSVFLLLKRSISPKIPRLLLAFVLISAFTTCLYITLSQASPFPELVTTRNNTSFNISEGILSLVVSLVLSSSLQFIINVTSASLLIHSLRRHIQKMQKNATGFWNPQMEAHVGAMKLMVYFLILYIPYSVATLVQYLPFYAGMDMGTKSICLIFATLYSPGHSVLIIITHPKLKTTAKKILCFKK.

The Extracellular segment spans residues 1 to 9 (MLRLFYFSA). The chain crosses the membrane as a helical span at residues 10–30 (VIASVILNFVGIIMNLFITVV). The Cytoplasmic segment spans residues 31–46 (NCKTWVKSHRISSSDR). A helical membrane pass occupies residues 47–67 (ILFSLGITRFLMLGLFLVNTI). Over 68–81 (YFVSSNMERSVYLS) the chain is Extracellular. The helical transmembrane segment at 82 to 102 (AFFVLCFMFLDSSSLWFVTLL) threads the bilayer. The Cytoplasmic segment spans residues 103–131 (NILYCVKITNFQHSVFLLLKRSISPKIPR). The chain crosses the membrane as a helical span at residues 132–152 (LLLAFVLISAFTTCLYITLSQ). Residues 153–172 (ASPFPELVTTRNNTSFNISE) are Extracellular-facing. Residues N164, N165, and N169 are each glycosylated (N-linked (GlcNAc...) asparagine). Residues 173–193 (GILSLVVSLVLSSSLQFIINV) form a helical membrane-spanning segment. At 194 to 230 (TSASLLIHSLRRHIQKMQKNATGFWNPQMEAHVGAMK) the chain is on the cytoplasmic side. A helical membrane pass occupies residues 231–251 (LMVYFLILYIPYSVATLVQYL). Residues 252-262 (PFYAGMDMGTK) are Extracellular-facing. A helical transmembrane segment spans residues 263–283 (SICLIFATLYSPGHSVLIIIT). The Cytoplasmic segment spans residues 284-299 (HPKLKTTAKKILCFKK).

It belongs to the G-protein coupled receptor T2R family.

Its subcellular location is the membrane. It is found in the cell projection. The protein localises to the cilium membrane. Gustducin-coupled receptor implicated in the perception of bitter compounds in the oral cavity and the gastrointestinal tract. Signals through PLCB2 and the calcium-regulated cation channel TRPM5. In airway epithelial cells, binding of denatonium increases the intracellular calcium ion concentration and stimulates ciliary beat frequency. This is Taste receptor type 2 member 4 (TAS2R4) from Gorilla gorilla gorilla (Western lowland gorilla).